Reading from the N-terminus, the 166-residue chain is Disulfide bond formation protein B (166 aa).

The Cytoplasmic portion of the chain corresponds to 1–12 (MKITKLPSYRQT). The chain crosses the membrane as a helical span at residues 13–29 (ALIIFAGCVGLILAALY). At 30 to 47 (MQEVLGLHPCPLCITQRI) the chain is on the periplasmic side. A disulfide bond links C39 and C42. The helical transmembrane segment at 48–64 (FIIGVGLISLIAAIHNP) threads the bilayer. The Cytoplasmic portion of the chain corresponds to 65 to 70 (AALGRK). The chain crosses the membrane as a helical span at residues 71–88 (VYGCLATLSGVIGAGVSA). At 89–145 (RHVWLQNLPEDQVPACGPDLAYMFDAFPLLDALKLLFAGDGNCADVVASFLGLSIPG) the chain is on the periplasmic side. C104 and C131 are joined by a disulfide. The chain crosses the membrane as a helical span at residues 146-164 (WTFVAFVGLIAISVWQGLR). The Cytoplasmic segment spans residues 165 to 166 (KA).

Belongs to the DsbB family.

It is found in the cell inner membrane. In terms of biological role, required for disulfide bond formation in some periplasmic proteins. Acts by oxidizing the DsbA protein. The polypeptide is Disulfide bond formation protein B (Saccharophagus degradans (strain 2-40 / ATCC 43961 / DSM 17024)).